We begin with the raw amino-acid sequence, 61 residues long: uncharacterized protein (61 aa).

This is an uncharacterized protein from Staphylococcus epidermidis.